A 74-amino-acid chain; its full sequence is Large ribosomal subunit protein uL14c (74 aa).

Belongs to the universal ribosomal protein uL14 family. In terms of assembly, part of the 50S ribosomal subunit.

The protein localises to the plastid. It localises to the chloroplast. Its function is as follows. Binds to 23S rRNA. The chain is Large ribosomal subunit protein uL14c (rpl14) from Oenothera ammophila (Evening primerose).